The sequence spans 747 residues: Putative T-box protein 31 (747 aa).

Residues 33–199 (QMLTKRKKTN…AGPAAKKTPD (167 aa)) constitute a DNA-binding region (T-box). Disordered regions lie at residues 268–289 (SLSS…DFDD) and 332–364 (SINN…VRDK). The segment covering 332–358 (SINNPGYLSTASSPAALNQDSSASEKS) has biased composition (polar residues).

It is found in the nucleus. The protein is Putative T-box protein 31 (tbx-31) of Caenorhabditis elegans.